Here is a 259-residue protein sequence, read N- to C-terminus: 5'-nucleotidase SurE (259 aa).

Positions 8, 9, 39, and 95 each coordinate a divalent metal cation.

This sequence belongs to the SurE nucleotidase family. Requires a divalent metal cation as cofactor.

The protein localises to the cytoplasm. The catalysed reaction is a ribonucleoside 5'-phosphate + H2O = a ribonucleoside + phosphate. Nucleotidase that shows phosphatase activity on nucleoside 5'-monophosphates. The sequence is that of 5'-nucleotidase SurE from Pseudothermotoga lettingae (strain ATCC BAA-301 / DSM 14385 / NBRC 107922 / TMO) (Thermotoga lettingae).